The sequence spans 229 residues: Ion-translocating oxidoreductase complex subunit E (229 aa).

5 consecutive transmembrane segments (helical) span residues Leu58–Phe78, Ile82–Ile102, Leu105–Val125, Ala147–Ile167, and Gly201–Val221.

The protein belongs to the NqrDE/RnfAE family. In terms of assembly, the complex is composed of six subunits: RnfA, RnfB, RnfC, RnfD, RnfE and RnfG.

The protein resides in the cell inner membrane. Part of a membrane-bound complex that couples electron transfer with translocation of ions across the membrane. This is Ion-translocating oxidoreductase complex subunit E from Glaesserella parasuis serovar 5 (strain SH0165) (Haemophilus parasuis).